The following is a 114-amino-acid chain: Probable non-functional T cell receptor beta variable 5-3 (114 aa).

A signal peptide spans 1-21; that stretch reads MGPGLLCWELLYLLGAGPVEA. In terms of domain architecture, Ig-like spans 22 to 114; it reads GVTQSPTHLI…SALYLCARSL (93 aa). Cysteines 42 and 110 form a disulfide. Asn-96 carries an N-linked (GlcNAc...) asparagine glycan.

As to quaternary structure, alpha-beta TR is a heterodimer composed of an alpha and beta chain; disulfide-linked. The alpha-beta TR is associated with the transmembrane signaling CD3 coreceptor proteins to form the TR-CD3 (TcR or TCR). The assembly of alpha-beta TR heterodimers with CD3 occurs in the endoplasmic reticulum where a single alpha-beta TR heterodimer associates with one CD3D-CD3E heterodimer, one CD3G-CD3E heterodimer and one CD247 homodimer forming a stable octameric structure. CD3D-CD3E and CD3G-CD3E heterodimers preferentially associate with TR alpha and TR beta chains, respectively. The association of the CD247 homodimer is the last step of TcR assembly in the endoplasmic reticulum and is required for transport to the cell surface.

The protein localises to the cell membrane. Functionally, probable non-functional open reading frame (ORF) of V region of the variable domain of T cell receptor (TR) beta chain. Non-functional ORF generally cannot participate in the synthesis of a productive T cell receptor (TR) chain due to altered V-(D)-J or switch recombination and/or splicing site (at mRNA level) and/or conserved amino acid change (protein level). Alpha-beta T cell receptors are antigen specific receptors which are essential to the immune response and are present on the cell surface of T lymphocytes. Recognize peptide-major histocompatibility (MH) (pMH) complexes that are displayed by antigen presenting cells (APC), a prerequisite for efficient T cell adaptive immunity against pathogens. Binding of alpha-beta TR to pMH complex initiates TR-CD3 clustering on the cell surface and intracellular activation of LCK that phosphorylates the ITAM motifs of CD3G, CD3D, CD3E and CD247 enabling the recruitment of ZAP70. In turn ZAP70 phosphorylates LAT, which recruits numerous signaling molecules to form the LAT signalosome. The LAT signalosome propagates signal branching to three major signaling pathways, the calcium, the mitogen-activated protein kinase (MAPK) kinase and the nuclear factor NF-kappa-B (NF-kB) pathways, leading to the mobilization of transcription factors that are critical for gene expression and essential for T cell growth and differentiation. The T cell repertoire is generated in the thymus, by V-(D)-J rearrangement. This repertoire is then shaped by intrathymic selection events to generate a peripheral T cell pool of self-MH restricted, non-autoaggressive T cells. Post-thymic interaction of alpha-beta TR with the pMH complexes shapes TR structural and functional avidity. The protein is Probable non-functional T cell receptor beta variable 5-3 of Homo sapiens (Human).